The following is a 408-amino-acid chain: Protein SPATA31F3 (408 aa).

Residues 11 to 31 traverse the membrane as a helical segment; that stretch reads VGYPFYTYGSIIIIALIIWQV. The interval 51-71 is disordered; the sequence is QKVKQRAKEKTPRARRHSRKE. A Phosphoserine modification is found at S152. 2 disordered regions span residues 297 to 316 and 351 to 408; these read TKTKKAEKSPPSTKRPMKGA and LPLS…SASS. A compositionally biased stretch (polar residues) spans 351–392; sequence LPLSSGSSKRSPLLTCATQPENPSHVSVSTSAEGTCLPQEST.

Belongs to the SPATA31 family.

Its subcellular location is the membrane. The protein is Protein SPATA31F3 (SPATA31F3) of Bos taurus (Bovine).